We begin with the raw amino-acid sequence, 623 residues long: Probable lysophospholipase 5 (623 aa).

An N-terminal signal peptide occupies residues 1-19 (MKLSSFGLFLALQLLPALG). A PLA2c domain is found at 67–607 (ACPSGSLLRP…NQYCWNGTIA (541 aa)). N-linked (GlcNAc...) asparagine glycosylation is found at Asn118, Asn153, Asn187, Asn232, Asn256, Asn264, Asn293, Asn331, Asn360, Asn367, Asn400, Asn403, Asn474, Asn508, Asn513, Asn537, Asn564, Asn586, and Asn603.

The protein belongs to the lysophospholipase family.

The protein resides in the secreted. It carries out the reaction a 1-acyl-sn-glycero-3-phosphocholine + H2O = sn-glycerol 3-phosphocholine + a fatty acid + H(+). Its function is as follows. Catalyzes the release of fatty acids from lysophospholipids. This is Probable lysophospholipase 5 (plb5) from Schizosaccharomyces pombe (strain 972 / ATCC 24843) (Fission yeast).